The following is a 443-amino-acid chain: Spermidine hydroxycinnamoyltransferase 1 (443 aa).

Active-site proton acceptor residues include H167 and D390.

It belongs to the plant acyltransferase family.

In terms of biological role, hydroxycinnamoyl transferase that catalyzes the transfer of an acyl from p-coumaryol-CoA to spermidine, to produce coumaroyl spermidine. Can use feruloyl-CoA as acyl donor. Contributes to the natural variation of spermidine-based phenolamides in rice cultivars. The polypeptide is Spermidine hydroxycinnamoyltransferase 1 (Oryza sativa subsp. japonica (Rice)).